A 615-amino-acid chain; its full sequence is Elongation factor 4 (615 aa).

The tr-type G domain maps to 17 to 198 (ASIRNFCIIA…RVSRTIPAPV (182 aa)). Residues 29-34 (DHGKST) and 145-148 (NKID) contribute to the GTP site.

It belongs to the TRAFAC class translation factor GTPase superfamily. Classic translation factor GTPase family. LepA subfamily.

The protein resides in the cell membrane. The catalysed reaction is GTP + H2O = GDP + phosphate + H(+). Required for accurate and efficient protein synthesis under certain stress conditions. May act as a fidelity factor of the translation reaction, by catalyzing a one-codon backward translocation of tRNAs on improperly translocated ribosomes. Back-translocation proceeds from a post-translocation (POST) complex to a pre-translocation (PRE) complex, thus giving elongation factor G a second chance to translocate the tRNAs correctly. Binds to ribosomes in a GTP-dependent manner. The protein is Elongation factor 4 of Clavibacter michiganensis subsp. michiganensis (strain NCPPB 382).